The primary structure comprises 1390 residues: DNA-directed RNA polymerase subunit beta (1390 aa).

Belongs to the RNA polymerase beta chain family. The RNAP catalytic core consists of 2 alpha, 1 beta, 1 beta' and 1 omega subunit. When a sigma factor is associated with the core the holoenzyme is formed, which can initiate transcription.

The enzyme catalyses RNA(n) + a ribonucleoside 5'-triphosphate = RNA(n+1) + diphosphate. Its function is as follows. DNA-dependent RNA polymerase catalyzes the transcription of DNA into RNA using the four ribonucleoside triphosphates as substrates. The chain is DNA-directed RNA polymerase subunit beta from Methylobacillus flagellatus (strain ATCC 51484 / DSM 6875 / VKM B-1610 / KT).